The following is a 642-amino-acid chain: Threonine--tRNA ligase (642 aa).

Residues 1–61 form the TGS domain; that stretch reads MPIITLPDGS…SEDANLEIIT (61 aa). The segment at 243–534 is catalytic; sequence DHRKIGKALN…ITEEYAGFFP (292 aa). The Zn(2+) site is built by C334, H385, and H511.

This sequence belongs to the class-II aminoacyl-tRNA synthetase family. In terms of assembly, homodimer. The cofactor is Zn(2+).

It localises to the cytoplasm. It carries out the reaction tRNA(Thr) + L-threonine + ATP = L-threonyl-tRNA(Thr) + AMP + diphosphate + H(+). In terms of biological role, catalyzes the attachment of threonine to tRNA(Thr) in a two-step reaction: L-threonine is first activated by ATP to form Thr-AMP and then transferred to the acceptor end of tRNA(Thr). Also edits incorrectly charged L-seryl-tRNA(Thr). The protein is Threonine--tRNA ligase of Histophilus somni (strain 2336) (Haemophilus somnus).